The primary structure comprises 716 residues: Hepatocyte growth factor-like protein (716 aa).

A signal peptide spans 1–18 (MGWLPLLLLLVQCSRALG). The 87-residue stretch at 19-105 (QRSPLNDFQL…SLCHLFQKKD (87 aa)) folds into the PAN domain. 20 disulfides stabilise this stretch: cysteine 56–cysteine 78, cysteine 60–cysteine 66, cysteine 110–cysteine 186, cysteine 131–cysteine 169, cysteine 157–cysteine 181, cysteine 191–cysteine 268, cysteine 194–cysteine 333, cysteine 212–cysteine 251, cysteine 240–cysteine 263, cysteine 292–cysteine 370, cysteine 313–cysteine 352, cysteine 341–cysteine 364, cysteine 379–cysteine 457, cysteine 400–cysteine 440, cysteine 428–cysteine 452, cysteine 477–cysteine 593, cysteine 512–cysteine 528, cysteine 607–cysteine 672, cysteine 637–cysteine 651, and cysteine 662–cysteine 690. Asparagine 72 carries an N-linked (GlcNAc...) asparagine glycan. 4 consecutive Kringle domains span residues 110 to 186 (CIMD…IKTC), 191 to 268 (CVLC…LPSC), 292 to 370 (CFRG…IPRC), and 379 to 457 (CYHG…LQRC). Residue asparagine 173 is glycosylated (N-linked (GlcNAc...) asparagine). The N-linked (GlcNAc...) asparagine glycan is linked to asparagine 305. Residues 489 to 714 (VVGGHPGNSP…FVDWINKVMQ (226 aa)) enclose the Peptidase S1 domain. Asparagine 620 carries N-linked (GlcNAc...) asparagine glycosylation.

Belongs to the peptidase S1 family. Plasminogen subfamily. As to quaternary structure, dimer of an alpha chain and a beta chain linked by a disulfide bond. Interacts (via beta chain) with MST1R (via SEMA domain). Post-translationally, cleaved after Arg-488, probably by HPN/Hepsin, to yield the active form consisting of two disulfide-linked chains. In terms of tissue distribution, liver. Lower levels in lung, placenta and adrenal.

The protein resides in the secreted. This Mus musculus (Mouse) protein is Hepatocyte growth factor-like protein (Mst1).